The chain runs to 341 residues: Terpene synthase 9 (341 aa).

The DDxx(x)D/E motif motif lies at 81-86 (DDILDS). The short motif at 222–230 (NDMASYCKE) is the NDxxSxxxD/E motif element.

This sequence belongs to the terpene synthase family.

The catalysed reaction is (2E,6E)-farnesyl diphosphate = (1S,2S,4R)-beta-elemene + diphosphate. The enzyme catalyses (2E,6E)-farnesyl diphosphate = germacrene D + diphosphate. Functionally, terpene synthase that converts its substrate farnesyl diphosphate (FPP) into the sesquiterpenes beta-elemene, germacrene D and a yet unidentified sesquiterpene. The chain is Terpene synthase 9 from Dictyostelium purpureum (Slime mold).